Reading from the N-terminus, the 445-residue chain is MSYSKFDLTFKIGQYLDRHLVFPLLEFLAAKETYDQSELLQAKLEILSKTNMIDYVTDIRRMLYPEEDTPEEIIQRRGVVLSELQELQDAVEPVLRLMQRDDVMKTIETMRDPKTLINHLSTNKEYEFKIEMIDSMYRLAKYRYECGNYVESASYLYFCQLVMSPTDKNYLSVLWGKLASEILVQNWDGALDDLTKLREFIDNGGAGSTASNMQALQQRTWLVHWSLFVFFNHVKGRDLIIEMFLYKPLYLNAIQTMCPHILRYLATAVIINRSRRNALKDLVKVIQQEAYTYRDPITEFIEHLYVNFDFEAARRKLNQCQAVLLTDFFLIACLEEFVENARLMIFETFCRIHQVISIGMLAENLNMQPDEAECWIVNLIRNARLDAKIDSKLGHVVMGAQPLSPYQQLVERIDSLAVRSEALTSLVERKHKARNQDIRWGAQEF.

Positions 230-403 (FFNHVKGRDL…GHVVMGAQPL (174 aa)) constitute a PCI domain.

It belongs to the eIF-3 subunit E family. As to quaternary structure, component of the eukaryotic translation initiation factor 3 (eIF-3) complex.

Its subcellular location is the cytoplasm. Component of the eukaryotic translation initiation factor 3 (eIF-3) complex, which is involved in protein synthesis of a specialized repertoire of mRNAs and, together with other initiation factors, stimulates binding of mRNA and methionyl-tRNAi to the 40S ribosome. The eIF-3 complex specifically targets and initiates translation of a subset of mRNAs involved in cell proliferation. This is Eukaryotic translation initiation factor 3 subunit E (eIF3-S6) from Bombyx mori (Silk moth).